The sequence spans 380 residues: Endo-chitosanase C (380 aa).

The first 22 residues, 1–22, serve as a signal peptide directing secretion; it reads MPIKSFASRLALSLAICGTAMG. An R3-1 repeat occupies 276–304; it reads CSWPGHCAGATCSSNDDCSDDLTCQNGKC. The stretch at 311–341 is one R3-2 repeat; sequence ETCSWEGHCKGATCSSNDDCSDELACISGIC. The R3-3 repeat unit spans residues 348–378; it reads ETCEWEGHCEGASCSSHDDCDGNLACKNGKC.

It belongs to the glycosyl hydrolase 75 family.

The protein resides in the secreted. It catalyses the reaction Endohydrolysis of beta-(1-&gt;4)-linkages between D-glucosamine residues in a partly acetylated chitosan.. Its function is as follows. Chitosanase catalyzing the endo-type cleavage of chitosan, the deacylated form of chitin. Chitosanase may be crucial in the degradation of the deacetylated portion of chitin in the fungal cell wall. Chitoolisaccharides produced by the hydrolysis of partially N-acetylated chitosan are known to have many biological activities, including antibacterial activity, immune-enhancing effects, and elicitor activity. This is Endo-chitosanase C (csnC) from Aspergillus oryzae (Yellow koji mold).